The following is a 589-amino-acid chain: Probable translation initiation factor IF-2 (589 aa).

The region spanning 4–225 (VRSPFVVVMG…AGVSQRFIPR (222 aa)) is the tr-type G domain. Positions 13-20 (GHVDVGKT) are G1. Residue 13–20 (GHVDVGKT) coordinates GTP. The interval 38–42 (MITQH) is G2. The interval 79–82 (DTPG) is G3. GTP-binding positions include 79-83 (DTPGH) and 133-136 (NKLD). The segment at 133–136 (NKLD) is G4. Residues 201-203 (SAV) form a G5 region.

It belongs to the TRAFAC class translation factor GTPase superfamily. Classic translation factor GTPase family. IF-2 subfamily.

In terms of biological role, function in general translation initiation by promoting the binding of the formylmethionine-tRNA to ribosomes. Seems to function along with eIF-2. The polypeptide is Probable translation initiation factor IF-2 (Pyrobaculum aerophilum (strain ATCC 51768 / DSM 7523 / JCM 9630 / CIP 104966 / NBRC 100827 / IM2)).